Here is a 345-residue protein sequence, read N- to C-terminus: Protein-glutamate methylesterase/protein-glutamine glutaminase 2 (345 aa).

The 116-residue stretch at 1 to 116 (MVVDDSAVVR…KQFLVDASDD (116 aa)) folds into the Response regulatory domain. Aspartate 50 carries the post-translational modification 4-aspartylphosphate. One can recognise a CheB-type methylesterase domain in the interval 154–345 (LQTTERVVAL…AREIMAQMAG (192 aa)). Catalysis depends on residues serine 166, histidine 192, and aspartate 288.

The protein belongs to the CheB family. Phosphorylated by CheA. Phosphorylation of the N-terminal regulatory domain activates the methylesterase activity.

It localises to the cytoplasm. It catalyses the reaction [protein]-L-glutamate 5-O-methyl ester + H2O = L-glutamyl-[protein] + methanol + H(+). The enzyme catalyses L-glutaminyl-[protein] + H2O = L-glutamyl-[protein] + NH4(+). Involved in chemotaxis. Part of a chemotaxis signal transduction system that modulates chemotaxis in response to various stimuli. Catalyzes the demethylation of specific methylglutamate residues introduced into the chemoreceptors (methyl-accepting chemotaxis proteins or MCP) by CheR. Also mediates the irreversible deamidation of specific glutamine residues to glutamic acid. This chain is Protein-glutamate methylesterase/protein-glutamine glutaminase 2, found in Albidiferax ferrireducens (strain ATCC BAA-621 / DSM 15236 / T118) (Rhodoferax ferrireducens).